A 780-amino-acid chain; its full sequence is Exocyst complex component 3-like protein (780 aa).

Belongs to the SEC6 family.

Its subcellular location is the cytoplasmic vesicle. It is found in the secretory vesicle. Functionally, as part of the exocyst, may play a role in regulated exocytosis. In Danio rerio (Zebrafish), this protein is Exocyst complex component 3-like protein (exoc3l1).